The sequence spans 268 residues: GTP cyclohydrolase FolE2 (268 aa).

It belongs to the GTP cyclohydrolase IV family.

The enzyme catalyses GTP + H2O = 7,8-dihydroneopterin 3'-triphosphate + formate + H(+). It participates in cofactor biosynthesis; 7,8-dihydroneopterin triphosphate biosynthesis; 7,8-dihydroneopterin triphosphate from GTP: step 1/1. In terms of biological role, converts GTP to 7,8-dihydroneopterin triphosphate. The sequence is that of GTP cyclohydrolase FolE2 from Ralstonia nicotianae (strain ATCC BAA-1114 / GMI1000) (Ralstonia solanacearum).